Reading from the N-terminus, the 249-residue chain is Uridylate kinase (249 aa).

16 to 19 (KLSG) is an ATP binding site. Glycine 57 is a UMP binding site. 2 residues coordinate ATP: glycine 58 and arginine 62. UMP-binding positions include aspartate 77 and 138–145 (AGMPYFST). The ATP site is built by asparagine 166, tyrosine 172, and aspartate 175.

Belongs to the UMP kinase family. In terms of assembly, homohexamer.

It is found in the cytoplasm. It catalyses the reaction UMP + ATP = UDP + ADP. It participates in pyrimidine metabolism; CTP biosynthesis via de novo pathway; UDP from UMP (UMPK route): step 1/1. Its activity is regulated as follows. Inhibited by UTP. Catalyzes the reversible phosphorylation of UMP to UDP. This is Uridylate kinase from Bifidobacterium adolescentis (strain ATCC 15703 / DSM 20083 / NCTC 11814 / E194a).